The following is a 441-amino-acid chain: ATP-dependent protease ATPase subunit HslU (441 aa).

Residues Ile-17, 60-65 (GVGKTE), Asp-253, Glu-319, and Arg-391 each bind ATP.

Belongs to the ClpX chaperone family. HslU subfamily. A double ring-shaped homohexamer of HslV is capped on each side by a ring-shaped HslU homohexamer. The assembly of the HslU/HslV complex is dependent on binding of ATP.

Its subcellular location is the cytoplasm. Its function is as follows. ATPase subunit of a proteasome-like degradation complex; this subunit has chaperone activity. The binding of ATP and its subsequent hydrolysis by HslU are essential for unfolding of protein substrates subsequently hydrolyzed by HslV. HslU recognizes the N-terminal part of its protein substrates and unfolds these before they are guided to HslV for hydrolysis. The polypeptide is ATP-dependent protease ATPase subunit HslU (Legionella pneumophila (strain Paris)).